We begin with the raw amino-acid sequence, 357 residues long: Neutral protease 2 homolog UREG_02006 (357 aa).

The N-terminal stretch at Met1–Ala19 is a signal peptide. A propeptide spanning residues Leu20–Arg179 is cleaved from the precursor. Cystine bridges form between Cys187-Cys259 and Cys266-Cys284. His308 serves as a coordination point for Zn(2+). The active site involves Glu309. Residues His312 and Asp323 each contribute to the Zn(2+) site.

It belongs to the peptidase M35 family. Zn(2+) serves as cofactor.

It is found in the secreted. It carries out the reaction Preferential cleavage of bonds with hydrophobic residues in P1'. Also 3-Asn-|-Gln-4 and 8-Gly-|-Ser-9 bonds in insulin B chain.. Secreted metalloproteinase that allows assimilation of proteinaceous substrates. Shows high activities on basic nuclear substrates such as histone and protamine. The polypeptide is Neutral protease 2 homolog UREG_02006 (Uncinocarpus reesii (strain UAMH 1704)).